The following is a 421-amino-acid chain: Inhibitor of growth protein 3 (421 aa).

The disordered stretch occupies residues 129-164 (PSQPVNNHHAHSHTPVEKRKYNPTSHHTATDHIPEK). Glycyl lysine isopeptide (Lys-Gly) (interchain with G-Cter in SUMO2) cross-links involve residues Lys148, Lys165, and Lys167. Lys181 carries the N6-acetyllysine modification. Residue Lys256 forms a Glycyl lysine isopeptide (Lys-Gly) (interchain with G-Cter in SUMO2) linkage. Lys264 bears the N6-acetyllysine mark. The segment at 286-324 (TQNASSSAADSRSGRKSKNNTKSSSQQSSSSSSSSSSSS) is disordered. The segment covering 308 to 324 (SSSQQSSSSSSSSSSSS) has biased composition (low complexity). The PHD-type zinc finger occupies 363–412 (PRYCICNQVSYGEMVGCDNQDCPIEWFHYGCVGLTEAPKGKWFCPQCTAA). 8 residues coordinate Zn(2+): Cys366, Cys368, Cys379, Cys384, His390, Cys393, Cys406, and Cys409.

The protein belongs to the ING family. As to quaternary structure, interacts with H3K4me3 and to a lesser extent with H3K4me2. Component of the NuA4 histone acetyltransferase complex which contains the catalytic subunit KAT5/TIP60 and the subunits EP400, TRRAP/PAF400, BRD8/SMAP, EPC1, DMAP1/DNMAP1, RUVBL1/TIP49, RUVBL2, ING3, actin, ACTL6A/BAF53A, MORF4L1/MRG15, MORF4L2/MRGX, MRGBP, YEATS4/GAS41, VPS72/YL1 and MEAF6. The NuA4 complex interacts with MYC. HTATTIP/TIP60, EPC1, and ING3 together constitute a minimal HAT complex termed Piccolo NuA4. Component of a SWR1-like complex.

The protein resides in the nucleus. In terms of biological role, component of the NuA4 histone acetyltransferase (HAT) complex which is involved in transcriptional activation of select genes principally by acetylation of nucleosomal histones H4 and H2A. This modification may both alter nucleosome - DNA interactions and promote interaction of the modified histones with other proteins which positively regulate transcription. This complex may be required for the activation of transcriptional programs associated with oncogene and proto-oncogene mediated growth induction, tumor suppressor mediated growth arrest and replicative senescence, apoptosis, and DNA repair. NuA4 may also play a direct role in DNA repair when directly recruited to sites of DNA damage. Component of a SWR1-like complex that specifically mediates the removal of histone H2A.Z/H2AZ1 from the nucleosome. This chain is Inhibitor of growth protein 3 (Ing3), found in Rattus norvegicus (Rat).